The primary structure comprises 227 residues: 2,3-bisphosphoglycerate-dependent phosphoglycerate mutase (227 aa).

Residues 7–14 (RHGFSEWN), 20–21 (TG), R59, 86–89 (ERHY), K97, 113–114 (RR), and 182–183 (GN) contribute to the substrate site. Catalysis depends on H8, which acts as the Tele-phosphohistidine intermediate. The active-site Proton donor/acceptor is E86.

It belongs to the phosphoglycerate mutase family. BPG-dependent PGAM subfamily. As to quaternary structure, homodimer.

The catalysed reaction is (2R)-2-phosphoglycerate = (2R)-3-phosphoglycerate. The protein operates within carbohydrate degradation; glycolysis; pyruvate from D-glyceraldehyde 3-phosphate: step 3/5. In terms of biological role, catalyzes the interconversion of 2-phosphoglycerate and 3-phosphoglycerate. The protein is 2,3-bisphosphoglycerate-dependent phosphoglycerate mutase of Haemophilus ducreyi (strain 35000HP / ATCC 700724).